Consider the following 409-residue polypeptide: Argininosuccinate synthase (409 aa).

ATP contacts are provided by residues 12–20 (AYSGGLDTS) and Ala-39. Position 91 (Tyr-91) interacts with L-citrulline. Position 121 (Gly-121) interacts with ATP. L-aspartate contacts are provided by Thr-123, Asn-127, and Asp-128. Asn-127 is a binding site for L-citrulline. The L-citrulline site is built by Arg-131, Ser-180, Ser-189, Glu-265, and Tyr-277.

The protein belongs to the argininosuccinate synthase family. Type 1 subfamily. As to quaternary structure, homotetramer.

It is found in the cytoplasm. The catalysed reaction is L-citrulline + L-aspartate + ATP = 2-(N(omega)-L-arginino)succinate + AMP + diphosphate + H(+). It participates in amino-acid biosynthesis; L-arginine biosynthesis; L-arginine from L-ornithine and carbamoyl phosphate: step 2/3. The polypeptide is Argininosuccinate synthase (Buchnera aphidicola subsp. Baizongia pistaciae (strain Bp)).